Consider the following 444-residue polypeptide: NADH-quinone oxidoreductase subunit F (444 aa).

61-70 (GRGGAGFSTG) is an NAD(+) binding site. Residue 176–223 (GAGRYICGEETALINSLEGRRANPRSKPPFPAVFGLWGKPTCVNNVET) coordinates FMN. Positions 353, 356, 359, and 400 each coordinate [4Fe-4S] cluster.

This sequence belongs to the complex I 51 kDa subunit family. Composed of 13 different subunits. Subunits NuoCD, E, F, and G constitute the peripheral sector of the complex. FMN serves as cofactor. It depends on [4Fe-4S] cluster as a cofactor.

The enzyme catalyses a quinone + NADH + 5 H(+)(in) = a quinol + NAD(+) + 4 H(+)(out). Functionally, NDH-1 shuttles electrons from NADH, via FMN and iron-sulfur (Fe-S) centers, to quinones in the respiratory chain. Couples the redox reaction to proton translocation (for every two electrons transferred, four hydrogen ions are translocated across the cytoplasmic membrane), and thus conserves the redox energy in a proton gradient. In Buchnera aphidicola subsp. Acyrthosiphon pisum (strain APS) (Acyrthosiphon pisum symbiotic bacterium), this protein is NADH-quinone oxidoreductase subunit F (nuoF).